Consider the following 865-residue polypeptide: MPNIIRKLVENDKKELKKLNKMALQVESFADEMEHLTDEQLKAKTPELKERIAKGESLDDLLYEAFAVCREAARRVLGLYPFHVQIMGGIVLHNGDVPEMRTGEGKTLTATMPVYLNALSGKGVHVVTVNEYLATRDMTEMGELYSWLGLTVGLNLNSKSPEEKREAYNCDITYSTSAELGFDYLRDNMVTRAVDMVQKPLNYALVDEVDSILVDEARTPLIISGQAESSSALYYRADQFTKTLKGQNLNVATSDYEEGDDYKIDLQSKTISLTEEGIDKAEKFFQIENLYDMENVALTHFVDNALRANFIMLHDIDYMVDENQEVLIIDQFTGRTMPGRRYSDGLHQAIEAKEAVPIQDESKTMASITIQNYFRMYKKLSGMTGTAKTEEEEFREIYNIQITPIPTNRPVQRLDHPDLLYPTLEAKFKAVIDDIKRRHAEGQPILIGTVAVETSELISKKLVEAKIPHEVLNAKNHFREAQIIMNAGQQGAVTIATNMAGRGTDIKLGPGVIDHADPEFRGLAVIGTERHESRRIDNQLRGRSGRQGDPGVSQFYLSLEDELMKRFGSERVSAFLDRMRISGEDAVIKSGLITRQIESSQKRVEGNNYDSRKQVLQYDDVIREQREVIYAQRQEVILTKEDMTPVLMGMFKRTIDRQVDGHELAGNLKDEETVKDLLQTVQNTMLPEEAIELSELTGLSGQAMKDLIFDKVKSRYASQMEKLADPERQLEFQRAVILRVVDNNWSEHIDALDQMRQSVGLRGYAQNNPIVEYQEESYKMYNNMIGAIEFEVTRLMMKAQIQPQTAIRQEAPRMTTTASQENITNVGPDTSVSEEISFENVGRNDPCPCGSGKKFKNCHGRTHIA.

ATP-binding positions include Q85, 103–107, and D505; that span reads GEGKT. 4 residues coordinate Zn(2+): C847, C849, C858, and H859.

It belongs to the SecA family. In terms of assembly, monomer and homodimer. Part of the essential Sec protein translocation apparatus which comprises SecA, SecYEG and auxiliary proteins SecDF. Other proteins may also be involved. Zn(2+) is required as a cofactor.

It is found in the cell membrane. It localises to the cytoplasm. The catalysed reaction is ATP + H2O + cellular proteinSide 1 = ADP + phosphate + cellular proteinSide 2.. Its function is as follows. Part of the Sec protein translocase complex. Interacts with the SecYEG preprotein conducting channel. Has a central role in coupling the hydrolysis of ATP to the transfer of proteins into and across the cell membrane, serving as an ATP-driven molecular motor driving the stepwise translocation of polypeptide chains across the membrane. This Lactococcus lactis subsp. cremoris (strain SK11) protein is Protein translocase subunit SecA.